Reading from the N-terminus, the 736-residue chain is Polyphosphate kinase (736 aa).

Residue N91 participates in ATP binding. R421 and R451 together coordinate Mg(2+). H481 functions as the Phosphohistidine intermediate in the catalytic mechanism. ATP contacts are provided by Y514, R610, and H638.

The protein belongs to the polyphosphate kinase 1 (PPK1) family. Mg(2+) serves as cofactor. Post-translationally, an intermediate of this reaction is the autophosphorylated ppk in which a phosphate is covalently linked to a histidine residue through a N-P bond.

The enzyme catalyses [phosphate](n) + ATP = [phosphate](n+1) + ADP. Its function is as follows. Catalyzes the reversible transfer of the terminal phosphate of ATP to form a long-chain polyphosphate (polyP). This Pseudomonas syringae pv. tomato (strain ATCC BAA-871 / DC3000) protein is Polyphosphate kinase.